A 490-amino-acid chain; its full sequence is Protein U94 (490 aa).

Residues 1–210 enclose the PV NS1-Nuc domain; that stretch reads MFSIINPSDD…SHFNKKPNVK (210 aa). Residues 312-463 enclose the SF3 helicase domain; it reads DPILAGTILY…IPRNFPVIQK (152 aa). 338-345 contributes to the ATP binding site; sequence GPPGCGKS.

The protein resides in the host nucleus. In Human herpesvirus 6B (HHV-6 variant B), this protein is Protein U94 (U94).